Consider the following 180-residue polypeptide: Ribulose bisphosphate carboxylase small subunit, chloroplastic (180 aa).

The N-terminal 56 residues, 1-56 (MASSVLSSAAVATRSNVAQANMVAPFTGLKSAASFPVSRKQNLDITSIASNGGRVQ), are a transit peptide targeting the chloroplast.

The protein belongs to the RuBisCO small chain family. Heterohexadecamer of 8 large and 8 small subunits. In terms of assembly, (Microbial infection) Binds to tobamovirus movement protein at the plasmodesmata (e.g. tomato mosaic virus MP AC P69513); this interaction seems required for viral systemic movement.

The protein localises to the plastid. It is found in the chloroplast. It localises to the cell junction. The protein resides in the plasmodesma. In terms of biological role, ruBisCO catalyzes two reactions: the carboxylation of D-ribulose 1,5-bisphosphate, the primary event in carbon dioxide fixation, as well as the oxidative fragmentation of the pentose substrate. Both reactions occur simultaneously and in competition at the same active site. Although the small subunit is not catalytic it is essential for maximal activity. Involved in antiviral defenses. Functionally, (Microbial infection) Required for tobamovirus movement (e.g. tobacco mosaic virus (TMV)). The chain is Ribulose bisphosphate carboxylase small subunit, chloroplastic from Nicotiana benthamiana.